The chain runs to 282 residues: Bifunctional protein FolD (282 aa).

NADP(+) is bound by residues 164-166 (GAS), I189, and I230.

The protein belongs to the tetrahydrofolate dehydrogenase/cyclohydrolase family. Homodimer.

The enzyme catalyses (6R)-5,10-methylene-5,6,7,8-tetrahydrofolate + NADP(+) = (6R)-5,10-methenyltetrahydrofolate + NADPH. It carries out the reaction (6R)-5,10-methenyltetrahydrofolate + H2O = (6R)-10-formyltetrahydrofolate + H(+). Its pathway is one-carbon metabolism; tetrahydrofolate interconversion. In terms of biological role, catalyzes the oxidation of 5,10-methylenetetrahydrofolate to 5,10-methenyltetrahydrofolate and then the hydrolysis of 5,10-methenyltetrahydrofolate to 10-formyltetrahydrofolate. This chain is Bifunctional protein FolD, found in Campylobacter jejuni (strain RM1221).